The primary structure comprises 123 residues: Gamma-synuclein (123 aa).

2 tandem repeats follow at residues 20-30 (EKTKQGVTEAA) and 31-41 (EKTKEGVMYVG). Residues 20-67 (EKTKQGVTEAAEKTKEGVMYVGTKTKGERGTSVTSVAEKTKEQANAVS) form a 4 X 11 AA tandem repeats of [EGSA]-K-T-K-[EQ]-[GQ]-V-X(4) region. Residues 42 to 56 (TKTKGERGTSVTSVA) form a 3; approximate repeat. Copy 4 of the repeat occupies 57 to 67 (EKTKEQANAVS). Residues S67 and S72 each carry the phosphoserine modification. Positions 93–123 (GVVRKEDLEPPAQDQEAKEQEEGEEAKSGGD) are disordered. The span at 107 to 123 (QEAKEQEEGEEAKSGGD) shows a compositional bias: basic and acidic residues. Phosphoserine; by BARK1, CaMK2 and CK2 is present on S120.

It belongs to the synuclein family. As to quaternary structure, may be a centrosome-associated protein. Interacts with MYOC; affects its secretion and its aggregation. Post-translationally, phosphorylated. Phosphorylation by GRK5 appears to occur on residues distinct from the residue phosphorylated by other kinases. Specifically expressed in the peripheral nervous system. High expression in motoneurons of the brainstem. Also found in neurons of many other brain regions including the cerebellar cortex, thalamus, hypothalamus and CA1, CA2, CA3 and CA4 regions of the hippocampus.

It is found in the cytoplasm. The protein localises to the perinuclear region. Its subcellular location is the cytoskeleton. The protein resides in the microtubule organizing center. It localises to the centrosome. It is found in the spindle. Functionally, plays a role in neurofilament network integrity. May be involved in modulating axonal architecture during development and in the adult. In vitro, increases the susceptibility of neurofilament-H to calcium-dependent proteases. May also function in modulating the keratin network in skin. Activates the MAPK and Elk-1 signal transduction pathway. This Rattus norvegicus (Rat) protein is Gamma-synuclein (Sncg).